A 558-amino-acid polypeptide reads, in one-letter code: MRSDAIKKGHLKAPNRSLLRACGLNDDDFNKPFIGVANSYIDIIPGHFFLNEYAKIIKDEIRKNGCIPFEFNTIGVDDGIAMGHDGMLYSLPSREIIANSIETVMNAHQLDALICIPNCDKITPGMLMGALRVNVPTIFVSGGPMRAGVNKHGEKISLSSVFEAVGAYEAKKINEDDLKDIECKACPSGGSCSGMFTANSMNTLCEAMGIALEGNGTILALSKEREELLRKAARRICEIALDERFKIRNIITKKSINNALVVDMAMGGSSNTILHMLAIAYEAGVNLDIKELNHISANVAHIAKIAPSLNTVYMEDIHKAGGVSAVIAEIAKKPGHILELDTLDISGKTLKERIENASIKDENIIRKINNAYSNIGGLAILFGNLAEQGCVIKTAGIMGERKFKGKAVCFNSQEEAIKGIIKGKVKEGDVCVIRYEGPKGGPGMQEMLSPTSLLTGMGLGAKVALITDGRFSGATRGLSIGHISPEAAEGGLIALLEDGDEIEIDVDNYSINANLAQDEIAKRKANFKMPNKQINSRWLKMYQKLVSNASKGGVLDLE.

D78 contacts Mg(2+). Position 119 (C119) interacts with [2Fe-2S] cluster. Residues D120 and K121 each coordinate Mg(2+). Position 121 is an N6-carboxylysine (K121). C192 contributes to the [2Fe-2S] cluster binding site. E446 contributes to the Mg(2+) binding site. S472 functions as the Proton acceptor in the catalytic mechanism.

It belongs to the IlvD/Edd family. In terms of assembly, homodimer. Requires [2Fe-2S] cluster as cofactor. The cofactor is Mg(2+).

It carries out the reaction (2R)-2,3-dihydroxy-3-methylbutanoate = 3-methyl-2-oxobutanoate + H2O. The catalysed reaction is (2R,3R)-2,3-dihydroxy-3-methylpentanoate = (S)-3-methyl-2-oxopentanoate + H2O. It functions in the pathway amino-acid biosynthesis; L-isoleucine biosynthesis; L-isoleucine from 2-oxobutanoate: step 3/4. The protein operates within amino-acid biosynthesis; L-valine biosynthesis; L-valine from pyruvate: step 3/4. Functions in the biosynthesis of branched-chain amino acids. Catalyzes the dehydration of (2R,3R)-2,3-dihydroxy-3-methylpentanoate (2,3-dihydroxy-3-methylvalerate) into 2-oxo-3-methylpentanoate (2-oxo-3-methylvalerate) and of (2R)-2,3-dihydroxy-3-methylbutanoate (2,3-dihydroxyisovalerate) into 2-oxo-3-methylbutanoate (2-oxoisovalerate), the penultimate precursor to L-isoleucine and L-valine, respectively. The protein is Dihydroxy-acid dehydratase of Campylobacter lari (strain RM2100 / D67 / ATCC BAA-1060).